Here is a 411-residue protein sequence, read N- to C-terminus: Glutamate dehydrogenase 2 (411 aa).

Residue K102 is part of the active site.

The protein belongs to the Glu/Leu/Phe/Val dehydrogenases family.

It is found in the mitochondrion. The enzyme catalyses L-glutamate + NAD(+) + H2O = 2-oxoglutarate + NH4(+) + NADH + H(+). It carries out the reaction L-glutamate + NADP(+) + H2O = 2-oxoglutarate + NH4(+) + NADPH + H(+). This chain is Glutamate dehydrogenase 2 (GDH2), found in Arabidopsis thaliana (Mouse-ear cress).